A 137-amino-acid chain; its full sequence is Glutamate mutase sigma subunit (137 aa).

Positions 3–137 constitute a B12-binding domain; that stretch reads KKTIVLGVIG…ADLKEDLNIK (135 aa). Residues 13 to 17, histidine 16, 61 to 63, and 93 to 97 each bind adenosylcob(III)alamin; these read SDCHA, SSL, and NIVVG.

Belongs to the methylaspartate mutase GlmS subunit family. In terms of assembly, heterotetramer composed of 2 epsilon subunits (GlmE) and 2 sigma subunits (GlmS). GlmE exists as a homodimer and GlmS as a monomer. Adenosylcob(III)alamin serves as cofactor.

It carries out the reaction (2S,3S)-3-methyl-L-aspartate = L-glutamate. Its pathway is amino-acid degradation; L-glutamate degradation via mesaconate pathway; acetate and pyruvate from L-glutamate: step 1/4. Its function is as follows. Catalyzes the carbon skeleton rearrangement of L-glutamate to L-threo-3-methylaspartate ((2S,3S)-3-methylaspartate). This is Glutamate mutase sigma subunit from Clostridium tetani (strain Massachusetts / E88).